Reading from the N-terminus, the 235-residue chain is Small ribosomal subunit protein uS3 (235 aa).

The KH type-2 domain occupies V39–K107. Residues A215–K226 show a composition bias toward low complexity. Residues A215–K235 are disordered.

It belongs to the universal ribosomal protein uS3 family. As to quaternary structure, part of the 30S ribosomal subunit. Forms a tight complex with proteins S10 and S14.

Functionally, binds the lower part of the 30S subunit head. Binds mRNA in the 70S ribosome, positioning it for translation. The sequence is that of Small ribosomal subunit protein uS3 from Histophilus somni (strain 129Pt) (Haemophilus somnus).